The following is a 604-amino-acid chain: Sulfite reductase [NADPH] flavoprotein alpha-component (604 aa).

One can recognise a Flavodoxin-like domain in the interval 65–203; sequence VTILYGSQTG…AAGQWHADVL (139 aa). FMN contacts are provided by residues 71–76, 118–121, and 154–163; these read SQTGNG, STHG, and LGDSSYEFFC. The 218-residue stretch at 236 to 453 folds into the FAD-binding FR-type domain; it reads QNPYSAEVLV…VEPNKHFRLP (218 aa). Residues Thr-324, Leu-358, 392-395, 410-412, and 425-428 contribute to the FAD site; these read RLYS, TVA, and GGAS. NADP(+)-binding positions include 524-525, 530-534, and Asp-566; these read SR and KIYVQ. Residue Tyr-604 coordinates FAD.

This sequence belongs to the NADPH-dependent sulphite reductase flavoprotein subunit CysJ family. In the N-terminal section; belongs to the flavodoxin family. It in the C-terminal section; belongs to the flavoprotein pyridine nucleotide cytochrome reductase family. In terms of assembly, alpha(8)-beta(8). The alpha component is a flavoprotein, the beta component is a hemoprotein. FAD is required as a cofactor. Requires FMN as cofactor.

The catalysed reaction is hydrogen sulfide + 3 NADP(+) + 3 H2O = sulfite + 3 NADPH + 4 H(+). It functions in the pathway sulfur metabolism; hydrogen sulfide biosynthesis; hydrogen sulfide from sulfite (NADPH route): step 1/1. Its function is as follows. Component of the sulfite reductase complex that catalyzes the 6-electron reduction of sulfite to sulfide. This is one of several activities required for the biosynthesis of L-cysteine from sulfate. The flavoprotein component catalyzes the electron flow from NADPH -&gt; FAD -&gt; FMN to the hemoprotein component. The chain is Sulfite reductase [NADPH] flavoprotein alpha-component from Shewanella sp. (strain MR-7).